Here is a 141-residue protein sequence, read N- to C-terminus: Large ribosomal subunit protein uL11 (141 aa).

This sequence belongs to the universal ribosomal protein uL11 family. Part of the ribosomal stalk of the 50S ribosomal subunit. Interacts with L10 and the large rRNA to form the base of the stalk. L10 forms an elongated spine to which L12 dimers bind in a sequential fashion forming a multimeric L10(L12)X complex. One or more lysine residues are methylated.

Forms part of the ribosomal stalk which helps the ribosome interact with GTP-bound translation factors. This is Large ribosomal subunit protein uL11 from Streptococcus equi subsp. equi (strain 4047).